A 480-amino-acid polypeptide reads, in one-letter code: UDP-N-acetylmuramate--L-alanine ligase (480 aa).

125-131 (GTHGKTT) is a binding site for ATP.

It belongs to the MurCDEF family.

It localises to the cytoplasm. The enzyme catalyses UDP-N-acetyl-alpha-D-muramate + L-alanine + ATP = UDP-N-acetyl-alpha-D-muramoyl-L-alanine + ADP + phosphate + H(+). It participates in cell wall biogenesis; peptidoglycan biosynthesis. Cell wall formation. The polypeptide is UDP-N-acetylmuramate--L-alanine ligase (Ectopseudomonas mendocina (strain ymp) (Pseudomonas mendocina)).